A 445-amino-acid polypeptide reads, in one-letter code: Na(+)-translocating NADH-quinone reductase subunit A (445 aa).

It belongs to the NqrA family. As to quaternary structure, composed of six subunits; NqrA, NqrB, NqrC, NqrD, NqrE and NqrF.

The enzyme catalyses a ubiquinone + n Na(+)(in) + NADH + H(+) = a ubiquinol + n Na(+)(out) + NAD(+). NQR complex catalyzes the reduction of ubiquinone-1 to ubiquinol by two successive reactions, coupled with the transport of Na(+) ions from the cytoplasm to the periplasm. NqrA to NqrE are probably involved in the second step, the conversion of ubisemiquinone to ubiquinol. This is Na(+)-translocating NADH-quinone reductase subunit A from Pseudomonas aeruginosa (strain UCBPP-PA14).